The primary structure comprises 477 residues: Prolyl tri/tetrapeptidyl aminopeptidase (477 aa).

The N-terminal stretch at 1–27 is a signal peptide; that stretch reads MRKALRSLLAASMLIGAIGAGSATAEA. Residues 28-33 constitute a propeptide that is removed on maturation; it reads ASITAP. Positions 448–477 are disordered; it reads QKDEKAAKPLAPFDAKLDRVKNDKQSALRP. Positions 462–477 are enriched in basic and acidic residues; sequence AKLDRVKNDKQSALRP.

Belongs to the peptidase S37 family.

It localises to the secreted. Its subcellular location is the cell surface. Completely inhibited by the serine protease inhibitor phenylmethylsulfonyl fluoride. Partially inhibited by the serine protease inhibitor Pefabloc. Not inhibited by cysteine proteinase-specific or metalloproteinase-specific inhibitors. Not inhibited by prolinal or its derivatives. EDTA and EGTA both partially inhibit this enzyme. EDTA has no effect on activity. Its function is as follows. Has proline-specific tripeptidyl aminopeptidase and tetrapeptidyl aminopeptidase activity. Activity is highest against tripeptides containing an Ala-Pro motif. Involved in the final processing of transglutaminase, by removing either the tetrapeptide Phe-Arg-Ala-Pro left after TAMEP or SAM-P45 hydrolysis, or the tripeptide Arg-Ala-Pro left after SGMP II hydrolysis in a single step. This is Prolyl tri/tetrapeptidyl aminopeptidase (ptp) from Streptomyces mobaraensis (Streptoverticillium mobaraense).